Here is a 351-residue protein sequence, read N- to C-terminus: Fe(3+) ions import ATP-binding protein FbpC (351 aa).

The 231-residue stretch at 7-237 (VELKNVTKRF…PASEFMASFM (231 aa)) folds into the ABC transporter domain. 39–46 (GPSGCGKT) lines the ATP pocket.

The protein belongs to the ABC transporter superfamily. Fe(3+) ion importer (TC 3.A.1.10) family. The complex is composed of two ATP-binding proteins (FbpC), two transmembrane proteins (FbpB) and a solute-binding protein (FbpA).

It localises to the cell inner membrane. The catalysed reaction is Fe(3+)(out) + ATP + H2O = Fe(3+)(in) + ADP + phosphate + H(+). Its function is as follows. Part of the ABC transporter complex FbpABC involved in Fe(3+) ions import. Responsible for energy coupling to the transport system. The protein is Fe(3+) ions import ATP-binding protein FbpC of Photorhabdus laumondii subsp. laumondii (strain DSM 15139 / CIP 105565 / TT01) (Photorhabdus luminescens subsp. laumondii).